The sequence spans 66 residues: Sec-independent protein translocase protein TatA (66 aa).

A helical transmembrane segment spans residues 1-21; that stretch reads MIGGLGMPELIIILVIILIIF. A disordered region spans residues 45-66; that stretch reads RDAELNEGDKDDKEKEQEKLDK.

This sequence belongs to the TatA/E family. The Tat system comprises two distinct complexes: a TatABC complex, containing multiple copies of TatA, TatB and TatC subunits, and a separate TatA complex, containing only TatA subunits. Substrates initially bind to the TatABC complex, which probably triggers association of the separate TatA complex to form the active translocon.

The protein resides in the cell inner membrane. Its function is as follows. Part of the twin-arginine translocation (Tat) system that transports large folded proteins containing a characteristic twin-arginine motif in their signal peptide across membranes. TatA could form the protein-conducting channel of the Tat system. This is Sec-independent protein translocase protein TatA from Desulforapulum autotrophicum (strain ATCC 43914 / DSM 3382 / VKM B-1955 / HRM2) (Desulfobacterium autotrophicum).